A 556-amino-acid polypeptide reads, in one-letter code: 2-succinyl-5-enolpyruvyl-6-hydroxy-3-cyclohexene-1-carboxylate synthase (556 aa).

Belongs to the TPP enzyme family. MenD subfamily. In terms of assembly, homodimer. The cofactor is Mg(2+). Mn(2+) is required as a cofactor. Thiamine diphosphate serves as cofactor.

The catalysed reaction is isochorismate + 2-oxoglutarate + H(+) = 5-enolpyruvoyl-6-hydroxy-2-succinyl-cyclohex-3-ene-1-carboxylate + CO2. It participates in quinol/quinone metabolism; 1,4-dihydroxy-2-naphthoate biosynthesis; 1,4-dihydroxy-2-naphthoate from chorismate: step 2/7. It functions in the pathway quinol/quinone metabolism; menaquinone biosynthesis. In terms of biological role, catalyzes the thiamine diphosphate-dependent decarboxylation of 2-oxoglutarate and the subsequent addition of the resulting succinic semialdehyde-thiamine pyrophosphate anion to isochorismate to yield 2-succinyl-5-enolpyruvyl-6-hydroxy-3-cyclohexene-1-carboxylate (SEPHCHC). The chain is 2-succinyl-5-enolpyruvyl-6-hydroxy-3-cyclohexene-1-carboxylate synthase from Klebsiella pneumoniae (strain 342).